We begin with the raw amino-acid sequence, 860 residues long: Probable linoleate 9S-lipoxygenase 4 (860 aa).

The PLAT domain maps to 29-159 (NALDFTDLAG…RYKSDRIFFA (131 aa)). Residues 162-860 (PYLPSETPEL…GKGIPNSVSI (699 aa)) form the Lipoxygenase domain. The disordered stretch occupies residues 209-246 (PDQGKENVRTTLGGSADYPYPRRGRTGRPPTRTDPKSE). Residues histidine 521, histidine 526, histidine 712, asparagine 716, and isoleucine 860 each contribute to the Fe cation site.

This sequence belongs to the lipoxygenase family. Monomer. Requires Fe cation as cofactor. Expressed in tubers and roots. Not detected in leaves, flowers, stems, shoot tips, or axillary buds.

The protein localises to the cytoplasm. The catalysed reaction is (9Z,12Z)-octadecadienoate + O2 = (9S)-hydroperoxy-(10E,12Z)-octadecadienoate. It functions in the pathway lipid metabolism; oxylipin biosynthesis. Its function is as follows. Plant lipoxygenases may be involved in a number of diverse aspects of plant physiology including growth and development, pest resistance, and senescence or responses to wounding. Catalyzes the hydroperoxidation of lipids containing a cis,cis-1,4-pentadiene structure. The protein is Probable linoleate 9S-lipoxygenase 4 (LOX1.4) of Solanum tuberosum (Potato).